The primary structure comprises 335 residues: Large ribosomal subunit protein uL3 (335 aa).

Belongs to the universal ribosomal protein uL3 family. As to quaternary structure, part of the 50S ribosomal subunit. Forms a cluster with proteins L14 and L24e.

In terms of biological role, one of the primary rRNA binding proteins, it binds directly near the 3'-end of the 23S rRNA, where it nucleates assembly of the 50S subunit. The protein is Large ribosomal subunit protein uL3 of Methanocaldococcus jannaschii (strain ATCC 43067 / DSM 2661 / JAL-1 / JCM 10045 / NBRC 100440) (Methanococcus jannaschii).